The primary structure comprises 556 residues: Adenine deaminase (556 aa).

Belongs to the metallo-dependent hydrolases superfamily. Adenine deaminase family. Requires Mn(2+) as cofactor.

It carries out the reaction adenine + H2O + H(+) = hypoxanthine + NH4(+). The chain is Adenine deaminase from Methanocaldococcus jannaschii (strain ATCC 43067 / DSM 2661 / JAL-1 / JCM 10045 / NBRC 100440) (Methanococcus jannaschii).